The chain runs to 1423 residues: Serum albumin SDS-1 (1423 aa).

The first 23 residues, 1-23 (MGKAMLKLCITLMVLVFSGTAES), serve as a signal peptide directing secretion. Positions 24 to 29 (KGVMRR) are excised as a propeptide. 7 consecutive Albumin domains span residues 29–230 (REDE…EDFK), 231–426 (HKLT…EFKS), 427–608 (EVEK…SDFK), 609–811 (MDVE…SQAR), 812–1031 (QEAL…HTIH), 1032–1226 (MEIR…AIEK), and 1227–1422 (VIKD…AIKS). Position 36 (H36) interacts with Cu cation. 16 cysteine pairs are disulfide-bonded: C42–C88, C87–C96, C109–C125, C124–C135, C167–C212, C211–C221, C244–C290, C289–C298, C311–C327, C326–C337, C363–C408, C407–C416, C439–C485, C484–C493, C506–C522, and C521–C532. N-linked (GlcNAc...) asparagine glycosylation is present at N490. The N-linked (GlcNAc...) asparagine glycan is linked to N541. Intrachain disulfides connect C556/C601, C622/C668, C667/C676, C689/C705, C704/C715, C747/C792, C791/C802, C825/C871, C870/C879, C892/C907, and C906/C947. N652 carries N-linked (GlcNAc...) asparagine glycosylation. A glycan (N-linked (GlcNAc...) asparagine) is linked at N754. N-linked (GlcNAc...) asparagine glycosylation is found at N908 and N911. A disordered region spans residues 910–936 (SNTSTTTSTTTSTTTSTTTSTTTSTTS). 7 tandem repeats follow at residues 913 to 916 (STTT), 917 to 920 (STTT), 921 to 924 (STTT), 925 to 928 (STTT), 929 to 932 (STTT), 933 to 935 (STT), and 936 to 939 (STTT). The interval 913–939 (STTTSTTTSTTTSTTTSTTTSTTSTTT) is 7 X 4 AA tandem repeats of S-T-T-T. N954 carries an N-linked (GlcNAc...) asparagine glycan. Cystine bridges form between C969–C1014, C1013–C1022, C1045–C1091, C1090–C1099, C1112–C1128, C1127–C1138, C1163–C1208, and C1207–C1216. A glycan (N-linked (GlcNAc...) asparagine) is linked at N1070. N1236 carries N-linked (GlcNAc...) asparagine glycosylation. 6 disulfide bridges follow: C1239–C1285, C1284–C1291, C1304–C1320, C1319–C1330, C1359–C1404, and C1403–C1412.

It belongs to the ALB/AFP/VDB family. In terms of tissue distribution, plasma.

The protein localises to the secreted. Functionally, serum albumin, the main protein of plasma, has a good binding capacity for water, Ca(2+), Na(+), K(+), fatty acids, hormones, bilirubin and drugs. Its main function is the regulation of the colloidal osmotic pressure of blood. This chain is Serum albumin SDS-1 (SDS-1), found in Petromyzon marinus (Sea lamprey).